A 672-amino-acid chain; its full sequence is DNA polymerase eta (672 aa).

Residues 14–254 (IAHVDMDCFY…LPIKKMKQLG (241 aa)) enclose the UmuC domain. Mg(2+) is bound by residues Asp18 and Met19. Positions 18 and 19 each coordinate Mn(2+). The a 2'-deoxyribonucleoside 5'-triphosphate site is built by Tyr23 and Arg60. Mg(2+) is bound by residues Asp120 and Glu121. Asp120 and Glu121 together coordinate Mn(2+). The active-site Proton acceptor is the Glu121. DNA-binding regions lie at residues 318–325 (KTFPGPRA) and 362–383 (TLHA…PSKS). Disordered regions lie at residues 521-617 (VSCP…TDWG) and 648-672 (QFNT…PLNR). Polar residues-rich tracts occupy residues 523-544 (CPSN…TQTK) and 570-586 (YNAT…DSTV). Composition is skewed to low complexity over residues 587–602 (SSAS…SHNS) and 651–662 (TGKSKGDGSTSS).

This sequence belongs to the DNA polymerase type-Y family. In terms of assembly, interacts with PCNA1 and PCNA2. The interaction with PCNA2 is required for translesion synthesis (TLS) to repair UV photoproducts. The cofactor is Mg(2+). Requires Mn(2+) as cofactor. As to expression, constitutively expressed in roots, stems, leaves, flowers and siliques.

The protein resides in the nucleus. It carries out the reaction DNA(n) + a 2'-deoxyribonucleoside 5'-triphosphate = DNA(n+1) + diphosphate. The enzyme in complex with the DNA substrate binds a third divalent metal cation. The binding of this third divalent cation, which is coordinated by water molecules and two oxygen atoms from DNA and dNTP, is essential for catalyzing the DNA synthesis. In terms of biological role, error-free DNA polymerase specifically involved in DNA repair. Plays an important role in translesion synthesis (TLS), where the normal high fidelity DNA polymerases cannot proceed and DNA synthesis stalls. Plays an important role in the repair of UV-induced pyrimidine dimers and confers resistance to ultraviolet light. Depending on the context, it inserts the correct base, but may cause base transitions and transversions. Forms a Schiff base with 5'-deoxyribose phosphate at abasic sites, but does not have lyase activity. Targets POLI to replication foci. Exhibits cyclobutane dimer nonmutagenic bypass activity in vitro. The sequence is that of DNA polymerase eta (POLH) from Arabidopsis thaliana (Mouse-ear cress).